The chain runs to 949 residues: Copper-transporting ATPase PAA1, chloroplastic (949 aa).

A chloroplast-targeting transit peptide spans 1–103; it reads MESTLSAFST…SSSPSFRSIS (103 aa). Gly residues predominate over residues 113–126; that stretch reads YNGGSGGGGGGGSE. Positions 113–142 are disordered; it reads YNGGSGGGGGGGSESGDSKSKLGANASDGV. An HMA domain is found at 148–222; sequence DIIILDVGGM…HLTNCGFQST (75 aa). Cysteine 159 and cysteine 162 together coordinate Cu(+). A run of 6 helical transmembrane segments spans residues 253-274, 287-306, 314-334, 349-369, 502-524, and 543-560; these read LAVSWALCAVCLVGHLTHFLGV, FHVSLCLITLLGPGRKLVLD, GSPNMNTLVGLGALSSFSVSS, EEPVMLIAFVLLGRNLEQRAK, VAGRFTYGVMALSAATFTFWNLF, and LQLSCSVLVVACPCALGL. The active-site 4-aspartylphosphate intermediate is aspartate 598. Position 807 to 814 (807 to 814) interacts with ATP; sequence GDGINDAA. Mg(2+) contacts are provided by aspartate 808 and aspartate 812. A run of 2 helical transmembrane segments spans residues 863 to 882 and 895 to 913; these read KQNLWWAFGYNIVGIPIAAG and SMAGALMGVSSLGVMTNSL. The segment at 925-949 is disordered; sequence DKNVKPEPKEGTKQPHENTRWKQSS.

It belongs to the cation transport ATPase (P-type) (TC 3.A.3) family. Type IB subfamily. As to expression, expressed in the shoots and roots.

It localises to the plastid. The protein localises to the chloroplast membrane. It catalyses the reaction Cu(+)(in) + ATP + H2O = Cu(+)(out) + ADP + phosphate + H(+). Its function is as follows. Mediates copper transfer across the plastid envelope. Required for the delivery of copper into the plastid stroma, which is essential for the function of copper proteins. Seems to be selective for monovalent copper Cu(+) transport. Also plays a role in glucose signaling-mediated cell proliferation of root meristem in non-green tissues. The sequence is that of Copper-transporting ATPase PAA1, chloroplastic (PAA1) from Arabidopsis thaliana (Mouse-ear cress).